The following is a 462-amino-acid chain: Glutamate--tRNA ligase 2 (462 aa).

The short motif at 8–18 (PSPTGYLHIGG) is the 'HIGH' region element. A 'KMSKS' region motif is present at residues 236-240 (KLSKR). Lys239 contacts ATP.

It belongs to the class-I aminoacyl-tRNA synthetase family. Glutamate--tRNA ligase type 1 subfamily. As to quaternary structure, monomer.

Its subcellular location is the cytoplasm. The enzyme catalyses tRNA(Glu) + L-glutamate + ATP = L-glutamyl-tRNA(Glu) + AMP + diphosphate. Functionally, catalyzes the attachment of glutamate to tRNA(Glu) in a two-step reaction: glutamate is first activated by ATP to form Glu-AMP and then transferred to the acceptor end of tRNA(Glu). The polypeptide is Glutamate--tRNA ligase 2 (Nitratiruptor sp. (strain SB155-2)).